The primary structure comprises 338 residues: Nicotinate-nucleotide--dimethylbenzimidazole phosphoribosyltransferase (338 aa).

Glutamate 305 (proton acceptor) is an active-site residue.

It belongs to the CobT family.

The enzyme catalyses 5,6-dimethylbenzimidazole + nicotinate beta-D-ribonucleotide = alpha-ribazole 5'-phosphate + nicotinate + H(+). It functions in the pathway nucleoside biosynthesis; alpha-ribazole biosynthesis; alpha-ribazole from 5,6-dimethylbenzimidazole: step 1/2. Functionally, catalyzes the synthesis of alpha-ribazole-5'-phosphate from nicotinate mononucleotide (NAMN) and 5,6-dimethylbenzimidazole (DMB). This Rhizobium meliloti (strain 1021) (Ensifer meliloti) protein is Nicotinate-nucleotide--dimethylbenzimidazole phosphoribosyltransferase.